The following is a 1009-amino-acid chain: Lateral signaling target protein 2 homolog (1009 aa).

Disordered stretches follow at residues 313–460 (PVGS…EEQL), 497–629 (ASED…KRCS), and 777–905 (MQRN…TATA). Low complexity-rich tracts occupy residues 327–348 (SSTP…SSSG), 364–398 (QRNN…TPTA), and 406–427 (PSHS…HPPA). Acidic residues predominate over residues 430–458 (SDGDDEDEDEEEDEEEDELEDTEDDTDEE). A Phosphoserine modification is found at serine 541. The segment covering 544 to 558 (SEPHRDQGETIKSTE) has biased composition (basic and acidic residues). Residues 562–575 (QQQQQQEQQTLQSS) show a composition bias toward low complexity. Composition is skewed to basic residues over residues 576 to 601 (RQRH…HHST) and 609 to 627 (QPHH…GRKR). The span at 780–798 (NNTIDNPSSSNTSSSSATT) shows a compositional bias: low complexity. The residue at position 807 (serine 807) is a Phosphoserine. The segment covering 822 to 878 (VHQQEQEMQQQQDHQQQQHQHQVQVQLQRQRNNSVGSNTPSSASSTSSSSEQNSPVS) has biased composition (low complexity). The segment at 917–977 (DGKAPRCMSC…VCRDCYVREV (61 aa)) adopts an FYVE-type zinc-finger fold. Positions 923, 926, 939, 942, 947, 950, 969, and 972 each coordinate Zn(2+).

This sequence belongs to the lst-2 family.

Negative regulator of epidermal growth factor receptor (EGFR) signaling. In Drosophila persimilis (Fruit fly), this protein is Lateral signaling target protein 2 homolog.